The following is a 178-amino-acid chain: Large ribosomal subunit protein uL6 (178 aa).

This sequence belongs to the universal ribosomal protein uL6 family. As to quaternary structure, part of the 50S ribosomal subunit.

This protein binds to the 23S rRNA, and is important in its secondary structure. It is located near the subunit interface in the base of the L7/L12 stalk, and near the tRNA binding site of the peptidyltransferase center. In Streptococcus gordonii (strain Challis / ATCC 35105 / BCRC 15272 / CH1 / DL1 / V288), this protein is Large ribosomal subunit protein uL6.